The chain runs to 284 residues: 2-dehydro-3-deoxyphosphooctonate aldolase (284 aa).

It belongs to the KdsA family.

Its subcellular location is the cytoplasm. The catalysed reaction is D-arabinose 5-phosphate + phosphoenolpyruvate + H2O = 3-deoxy-alpha-D-manno-2-octulosonate-8-phosphate + phosphate. Its pathway is carbohydrate biosynthesis; 3-deoxy-D-manno-octulosonate biosynthesis; 3-deoxy-D-manno-octulosonate from D-ribulose 5-phosphate: step 2/3. It participates in bacterial outer membrane biogenesis; lipopolysaccharide biosynthesis. The sequence is that of 2-dehydro-3-deoxyphosphooctonate aldolase from Sodalis glossinidius (strain morsitans).